The sequence spans 486 residues: Ribulose bisphosphate carboxylase large chain 1 (486 aa).

Asn125 and Thr175 together coordinate substrate. Residue Lys177 is the Proton acceptor of the active site. Lys179 is a substrate binding site. Residues Lys203, Asp205, and Glu206 each coordinate Mg(2+). Lys203 carries the post-translational modification N6-carboxylysine. His295 functions as the Proton acceptor in the catalytic mechanism. Substrate contacts are provided by Arg296, His328, and Ser380.

The protein belongs to the RuBisCO large chain family. Type I subfamily. As to quaternary structure, heterohexadecamer of 8 large chains and 8 small chains. Mg(2+) is required as a cofactor.

The catalysed reaction is 2 (2R)-3-phosphoglycerate + 2 H(+) = D-ribulose 1,5-bisphosphate + CO2 + H2O. It catalyses the reaction D-ribulose 1,5-bisphosphate + O2 = 2-phosphoglycolate + (2R)-3-phosphoglycerate + 2 H(+). Functionally, ruBisCO catalyzes two reactions: the carboxylation of D-ribulose 1,5-bisphosphate, the primary event in carbon dioxide fixation, as well as the oxidative fragmentation of the pentose substrate. Both reactions occur simultaneously and in competition at the same active site. This chain is Ribulose bisphosphate carboxylase large chain 1, found in Bradyrhizobium sp. (strain ORS 278).